The sequence spans 488 residues: UDP-glycosyltransferase 73B1 (488 aa).

UDP-alpha-D-glucose contacts are provided by residues Thr-297, 356 to 358 (APQ), 373 to 381 (HCGWNSLLE), and 395 to 398 (GAEQ).

Belongs to the UDP-glycosyltransferase family.

Functionally, possesses low quercetin 3-O-glucosyltransferase and 7-O-glucosyltransferase activities in vitro. This chain is UDP-glycosyltransferase 73B1 (UGT73B1), found in Arabidopsis thaliana (Mouse-ear cress).